Here is a 410-residue protein sequence, read N- to C-terminus: Phosphoglycerate kinase (410 aa).

Residues 24–26 (DLN), R40, 63–66 (HLGR), R122, and R162 each bind substrate. ATP is bound by residues K212, G300, E331, and 360–363 (GGDS).

This sequence belongs to the phosphoglycerate kinase family. In terms of assembly, monomer.

It is found in the cytoplasm. The catalysed reaction is (2R)-3-phosphoglycerate + ATP = (2R)-3-phospho-glyceroyl phosphate + ADP. It participates in carbohydrate degradation; glycolysis; pyruvate from D-glyceraldehyde 3-phosphate: step 2/5. The protein is Phosphoglycerate kinase of Nocardia farcinica (strain IFM 10152).